The primary structure comprises 521 residues: UDP-N-acetylmuramoyl-L-alanyl-D-glutamate--2,6-diaminopimelate ligase (521 aa).

Serine 33 serves as a coordination point for UDP-N-acetyl-alpha-D-muramoyl-L-alanyl-D-glutamate. 116–122 is a binding site for ATP; sequence GTNGKTT. UDP-N-acetyl-alpha-D-muramoyl-L-alanyl-D-glutamate contacts are provided by residues 158–159, serine 185, glutamine 191, and arginine 193; that span reads TT. Lysine 225 carries the post-translational modification N6-carboxylysine. Residues arginine 409, 433–436, glycine 483, and glutamate 487 contribute to the meso-2,6-diaminopimelate site; that span reads DNPR. The Meso-diaminopimelate recognition motif motif lies at 433–436; that stretch reads DNPR.

It belongs to the MurCDEF family. MurE subfamily. Mg(2+) is required as a cofactor. Post-translationally, carboxylation is probably crucial for Mg(2+) binding and, consequently, for the gamma-phosphate positioning of ATP.

It is found in the cytoplasm. The enzyme catalyses UDP-N-acetyl-alpha-D-muramoyl-L-alanyl-D-glutamate + meso-2,6-diaminopimelate + ATP = UDP-N-acetyl-alpha-D-muramoyl-L-alanyl-gamma-D-glutamyl-meso-2,6-diaminopimelate + ADP + phosphate + H(+). It participates in cell wall biogenesis; peptidoglycan biosynthesis. In terms of biological role, catalyzes the addition of meso-diaminopimelic acid to the nucleotide precursor UDP-N-acetylmuramoyl-L-alanyl-D-glutamate (UMAG) in the biosynthesis of bacterial cell-wall peptidoglycan. The chain is UDP-N-acetylmuramoyl-L-alanyl-D-glutamate--2,6-diaminopimelate ligase from Nitrosomonas europaea (strain ATCC 19718 / CIP 103999 / KCTC 2705 / NBRC 14298).